Consider the following 289-residue polypeptide: Lipoyl synthase 1 (289 aa).

Residues Cys33, Cys38, Cys44, Cys59, Cys63, Cys66, and Ser274 each coordinate [4Fe-4S] cluster. The region spanning 45–263 is the Radical SAM core domain; the sequence is FAGGTATFLI…RIGEEELGFL (219 aa).

It belongs to the radical SAM superfamily. Lipoyl synthase family. [4Fe-4S] cluster serves as cofactor.

Its subcellular location is the cytoplasm. It carries out the reaction [[Fe-S] cluster scaffold protein carrying a second [4Fe-4S](2+) cluster] + N(6)-octanoyl-L-lysyl-[protein] + 2 oxidized [2Fe-2S]-[ferredoxin] + 2 S-adenosyl-L-methionine + 4 H(+) = [[Fe-S] cluster scaffold protein] + N(6)-[(R)-dihydrolipoyl]-L-lysyl-[protein] + 4 Fe(3+) + 2 hydrogen sulfide + 2 5'-deoxyadenosine + 2 L-methionine + 2 reduced [2Fe-2S]-[ferredoxin]. It participates in protein modification; protein lipoylation via endogenous pathway; protein N(6)-(lipoyl)lysine from octanoyl-[acyl-carrier-protein]: step 2/2. Catalyzes the radical-mediated insertion of two sulfur atoms into the C-6 and C-8 positions of the octanoyl moiety bound to the lipoyl domains of lipoate-dependent enzymes, thereby converting the octanoylated domains into lipoylated derivatives. This Parasynechococcus marenigrum (strain WH8102) protein is Lipoyl synthase 1.